Here is a 414-residue protein sequence, read N- to C-terminus: 2,3-bisphosphoglycerate-independent phosphoglycerate mutase (414 aa).

It belongs to the BPG-independent phosphoglycerate mutase family. A-PGAM subfamily.

The enzyme catalyses (2R)-2-phosphoglycerate = (2R)-3-phosphoglycerate. The protein operates within carbohydrate degradation; glycolysis; pyruvate from D-glyceraldehyde 3-phosphate: step 3/5. In terms of biological role, catalyzes the interconversion of 2-phosphoglycerate and 3-phosphoglycerate. This is 2,3-bisphosphoglycerate-independent phosphoglycerate mutase from Saccharolobus solfataricus (strain ATCC 35092 / DSM 1617 / JCM 11322 / P2) (Sulfolobus solfataricus).